Here is a 252-residue protein sequence, read N- to C-terminus: Protein BTG3 (252 aa).

The interval valine 138 to serine 162 is disordered.

It belongs to the BTG family. As to expression, ubiquitous. High expression in the ventricular zone of the developing central nervous system. High in ovary, testis, prostate, thymus and lung.

Its function is as follows. Overexpression impairs serum-induced cell cycle progression from the G0/G1 to S phase. In Homo sapiens (Human), this protein is Protein BTG3 (BTG3).